Consider the following 247-residue polypeptide: Large ribosomal subunit protein uL24m (247 aa).

Positions 84 to 117 constitute a KOW domain; that stretch reads FFRGDRIEVLVGKDKGKQGIVTQVIPERNWVIVE.

This sequence belongs to the universal ribosomal protein uL24 family. As to quaternary structure, component of the mitochondrial ribosome large subunit (39S) which comprises a 16S rRNA and about 50 distinct proteins.

The protein localises to the mitochondrion. This Drosophila melanogaster (Fruit fly) protein is Large ribosomal subunit protein uL24m (mRpL24).